We begin with the raw amino-acid sequence, 305 residues long: GMP synthase [glutamine-hydrolyzing] subunit B (305 aa).

One can recognise a GMPS ATP-PPase domain in the interval 2-185 (VEPTAFIDEK…LDLESIIAER (184 aa)). 29-35 (SGGVDSS) is a binding site for ATP.

In terms of assembly, heterodimer composed of a glutamine amidotransferase subunit (A) and a GMP-binding subunit (B).

The catalysed reaction is XMP + L-glutamine + ATP + H2O = GMP + L-glutamate + AMP + diphosphate + 2 H(+). It participates in purine metabolism; GMP biosynthesis; GMP from XMP (L-Gln route): step 1/1. In terms of biological role, catalyzes the synthesis of GMP from XMP. This is GMP synthase [glutamine-hydrolyzing] subunit B from Natronomonas pharaonis (strain ATCC 35678 / DSM 2160 / CIP 103997 / JCM 8858 / NBRC 14720 / NCIMB 2260 / Gabara) (Halobacterium pharaonis).